We begin with the raw amino-acid sequence, 334 residues long: Tryptophan--tRNA ligase (334 aa).

Residues 12–14 and 20–21 contribute to the ATP site; these read QPS and GN. The 'HIGH' region motif lies at 13–21; that stretch reads PSGIPTLGN. L-tryptophan is bound at residue Asp-136. Residues 148–150, Ile-187, and 196–200 contribute to the ATP site; these read GKD and KMSKS. The short motif at 196–200 is the 'KMSKS' region element; the sequence is KMSKS.

This sequence belongs to the class-I aminoacyl-tRNA synthetase family. In terms of assembly, homodimer.

The protein localises to the cytoplasm. The catalysed reaction is tRNA(Trp) + L-tryptophan + ATP = L-tryptophyl-tRNA(Trp) + AMP + diphosphate + H(+). Catalyzes the attachment of tryptophan to tRNA(Trp). The polypeptide is Tryptophan--tRNA ligase (Wigglesworthia glossinidia brevipalpis).